The primary structure comprises 421 residues: Probable indole-3-pyruvate monooxygenase YUCCA9 (421 aa).

29-34 (GAGPSG) contributes to the FAD binding site. 196–201 (GCGNSG) is a binding site for NADP(+).

The protein belongs to the FMO family. It depends on FAD as a cofactor.

The catalysed reaction is indole-3-pyruvate + NADPH + O2 + H(+) = (indol-3-yl)acetate + CO2 + NADP(+) + H2O. It participates in plant hormone metabolism; auxin biosynthesis. In terms of biological role, involved in auxin biosynthesis. Belongs to the set of redundant YUCCA genes probably responsible for auxin biosynthesis in roots. In Arabidopsis thaliana (Mouse-ear cress), this protein is Probable indole-3-pyruvate monooxygenase YUCCA9 (YUC9).